The primary structure comprises 585 residues: tRNA 5-methylaminomethyl-2-thiouridine biosynthesis bifunctional protein MnmC (585 aa).

The tract at residues 1–236 is tRNA (mnm(5)s(2)U34)-methyltransferase; sequence MTPDGLYCDP…KRERLEAVWP (236 aa). Positions 254-585 are FAD-dependent cmnm(5)s(2)U34 oxidoreductase; it reads LGAGIAGASL…SRRAGQGAAG (332 aa). The interval 564–585 is disordered; the sequence is EAMAPGRFAERRSRRAGQGAAG.

The protein in the N-terminal section; belongs to the methyltransferase superfamily. tRNA (mnm(5)s(2)U34)-methyltransferase family. It in the C-terminal section; belongs to the DAO family. FAD is required as a cofactor.

It localises to the cytoplasm. It catalyses the reaction 5-aminomethyl-2-thiouridine(34) in tRNA + S-adenosyl-L-methionine = 5-methylaminomethyl-2-thiouridine(34) in tRNA + S-adenosyl-L-homocysteine + H(+). Catalyzes the last two steps in the biosynthesis of 5-methylaminomethyl-2-thiouridine (mnm(5)s(2)U) at the wobble position (U34) in tRNA. Catalyzes the FAD-dependent demodification of cmnm(5)s(2)U34 to nm(5)s(2)U34, followed by the transfer of a methyl group from S-adenosyl-L-methionine to nm(5)s(2)U34, to form mnm(5)s(2)U34. The polypeptide is tRNA 5-methylaminomethyl-2-thiouridine biosynthesis bifunctional protein MnmC (Maricaulis maris (strain MCS10) (Caulobacter maris)).